A 273-amino-acid chain; its full sequence is Ribosomal RNA small subunit methyltransferase A (273 aa).

S-adenosyl-L-methionine-binding residues include N18, L20, G45, E66, D91, and N113.

The protein belongs to the class I-like SAM-binding methyltransferase superfamily. rRNA adenine N(6)-methyltransferase family. RsmA subfamily.

Its subcellular location is the cytoplasm. It catalyses the reaction adenosine(1518)/adenosine(1519) in 16S rRNA + 4 S-adenosyl-L-methionine = N(6)-dimethyladenosine(1518)/N(6)-dimethyladenosine(1519) in 16S rRNA + 4 S-adenosyl-L-homocysteine + 4 H(+). Functionally, specifically dimethylates two adjacent adenosines (A1518 and A1519) in the loop of a conserved hairpin near the 3'-end of 16S rRNA in the 30S particle. May play a critical role in biogenesis of 30S subunits. The protein is Ribosomal RNA small subunit methyltransferase A of Salmonella typhimurium (strain LT2 / SGSC1412 / ATCC 700720).